Consider the following 618-residue polypeptide: Glucose starvation modulator protein 1 (618 aa).

A DNA-binding region (zn(2)-C6 fungal-type) is located at residues 20–48 (CEFCHTKHIQCDVGRPCQNCLKRNIGKFC). Residues 325–353 (ANANTQPSHNAKLESECDSSSHSDADLEK) are disordered. Residues 335 to 353 (AKLESECDSSSHSDADLEK) are compositionally biased toward basic and acidic residues. Residues 466–538 (LLDLENMAKL…QIFNELLAFG (73 aa)) enclose the PAS domain.

Belongs to the ERT1/acuK family.

The protein resides in the nucleus. Functionally, transcription factor which regulates nonfermentable carbon utilization. Binds specifically to 5'-CGGN(8)CGG-3' and 5'-CGGN(9)CGG-3' sequences in the promoter region. This is Glucose starvation modulator protein 1 (GSM1) from Saccharomyces cerevisiae (strain JAY291) (Baker's yeast).